The following is a 581-amino-acid chain: Leucine-rich repeat-containing protein 15 (581 aa).

Positions 1–21 (MPLKHYLLLLVGCQAWGAGLA) are cleaved as a signal peptide. Positions 22 to 53 (YHGCPSECTCSRASQVECTGARIVAVPTPLPW) constitute an LRRNT domain. Topologically, residues 22 to 538 (YHGCPSECTC…VWGMTQAQSG (517 aa)) are extracellular. 15 LRR repeats span residues 54–75 (NAMS…PFLN), 78–99 (ALIA…AFRN), 102–123 (SLRY…LFQG), 126–147 (SLES…HFSQ), 150–171 (NLKE…AFDH), 174–195 (GLTK…VFQH), 198–219 (NLQV…TFDG), 222–243 (NLQE…LFHN), 246–267 (NLQR…VFMQ), 270–291 (QLNR…IFGP), 294–315 (NLRE…VFSN), 318–339 (QLQV…AFNG), 342–363 (ELRE…VFRM), 366–387 (NLQN…IFAN), and 390–411 (GLMA…IFDH). An N-linked (GlcNAc...) asparagine glycan is attached at N75. N369 carries N-linked (GlcNAc...) asparagine glycosylation. In terms of domain architecture, LRRCT spans 423-475 (NPWRCDSDILPLRNWLLLNQPRLGTDTVPVCFSPANVRGQSLIIINVNVAVPS). The disordered stretch occupies residues 489-509 (WYPDTPSYPDTTSVSSTTELT). Residues 499–509 (TTSVSSTTELT) show a composition bias toward low complexity. A helical transmembrane segment spans residues 539-559 (LAIAAIVIGIVALACSLAACV). The Cytoplasmic segment spans residues 560–581 (GCCCCKKRSQAVLMQMKAPNEC).

In terms of assembly, (Microbial infection) Interacts with human coronavirus SARS-CoV-2 spike protein (via RBD domain); the interaction is direct and sequesters virions at the cell surface. (Microbial infection) Interacts with human coronavirus SARS-CoV-2 spike protein (via RBD domain); the interaction is direct. As to expression, expressed in brain and placenta. Expressed in lung fibroblasts. Expressed in chodrocytes.

The protein localises to the cell membrane. Its function is as follows. (Microbial infection) Modulates the ability of SARS-CoV-2 to infect host cells through interaction with the spike protein. Does not act as a SARS-CoV-2 entry receptor but sequesters virions and antagonizes in trans SARS-CoV-2 infection of ACE2(+) cells when expressed on nearby cells. The sequence is that of Leucine-rich repeat-containing protein 15 (LRRC15) from Homo sapiens (Human).